An 891-amino-acid chain; its full sequence is MLPTEVPQSHPGPSALLLLQLLLPPTSAFFPNIWSLLAAPGSITHQDLTEEAALNVTLQLFLEQPPPGRPPLRLEDFLGRTLLADDLFAAYFGPGSSRRFRAALGEVSRANAAQDFLPTSRNDPDLHFDAERLGQGRARLVGALRETVVAARALDHTLARQRLGAALHALQDFYSHSNWVELGEQQPHPHLLWPRQELQNLAQVADPTCSDCEELSCPRNWLGFTLLTSGYFGTHPPKPPGKCSHGGHFDRSSSQPPRGGINKDSTSPGFSPHHMLHLQAAKLALLASIQAFSLLRSRLGDRDFSRLLDITPASSLSFVLDTTGSMGEEINAAKIQARHLVEQRRGSPMEPVHYVLVPFHDPGFGPVFTTSDPDSFWQQLNEIHALGGGDEPEMCLSALQLALLHTPPLSDIFVFTDASPKDAFLTNQVESLTQERRCRVTFLVTEDTSRVQGRARREILSPLRFEPYKAVALASGGEVIFTKDQHIRDVAAIVGESMAALVTLPLDPPVVVPGQPLVFSVDGLLQKITVRIHGDISSFWIKNPAGVSQGQEEGGGPLGHTRRFGQFWMVTMDDPPQTGTWEIQVTAEDTPGVRVQAQTSLDFLFHFGIPMEDGPHPGLYPLTQPVAGLQTQLLVEVTGLGSRANPGDPQPHFSHVILRGVPEGAELGQVPLEPVGPPERGLLAASLSPTLLSTPRPFSLELIGQDAAGRRLHRAAPQPSTVVPVLLELSGPSGFLAPGSKVPLSLRIASFSGPQDLDLRTFVNPSFSLTSNLSRAHLELNESAWGRLWLEVPDSAAPDSVVMVTVTAGGREANPVPPTHAFLRLLVSAPAPQDRHTTPTGSSDPILTTATPAFSPFTLVTQGRAGAGLAAGSPWWGTVGGVLLLLGLASW.

Positions 1 to 28 (MLPTEVPQSHPGPSALLLLQLLLPPTSA) are cleaved as a signal peptide. An N-linked (GlcNAc...) asparagine glycan is attached at Asn55. The tract at residues 237 to 272 (PKPPGKCSHGGHFDRSSSQPPRGGINKDSTSPGFSP) is disordered. The VWFA domain occupies 313-506 (ASSLSFVLDT…SMAALVTLPL (194 aa)).

Expressed at low level in different cell lines.

The protein localises to the secreted. This chain is von Willebrand factor A domain-containing protein 7 (VWA7), found in Homo sapiens (Human).